The chain runs to 215 residues: Leucyl/phenylalanyl-tRNA--protein transferase (215 aa).

Belongs to the L/F-transferase family.

The protein resides in the cytoplasm. It carries out the reaction N-terminal L-lysyl-[protein] + L-leucyl-tRNA(Leu) = N-terminal L-leucyl-L-lysyl-[protein] + tRNA(Leu) + H(+). The catalysed reaction is N-terminal L-arginyl-[protein] + L-leucyl-tRNA(Leu) = N-terminal L-leucyl-L-arginyl-[protein] + tRNA(Leu) + H(+). The enzyme catalyses L-phenylalanyl-tRNA(Phe) + an N-terminal L-alpha-aminoacyl-[protein] = an N-terminal L-phenylalanyl-L-alpha-aminoacyl-[protein] + tRNA(Phe). Its function is as follows. Functions in the N-end rule pathway of protein degradation where it conjugates Leu, Phe and, less efficiently, Met from aminoacyl-tRNAs to the N-termini of proteins containing an N-terminal arginine or lysine. In Campylobacter jejuni subsp. doylei (strain ATCC BAA-1458 / RM4099 / 269.97), this protein is Leucyl/phenylalanyl-tRNA--protein transferase.